The primary structure comprises 66 residues: Large ribosomal subunit protein bL35 (66 aa).

A compositionally biased stretch (basic residues) spans 1–16; sequence MPKQKTHRASAKRFKR. Positions 1-20 are disordered; it reads MPKQKTHRASAKRFKRTGSG.

This sequence belongs to the bacterial ribosomal protein bL35 family.

This chain is Large ribosomal subunit protein bL35, found in Streptococcus thermophilus (strain ATCC BAA-250 / LMG 18311).